The sequence spans 411 residues: 2,3-bisphosphoglycerate-independent phosphoglycerate mutase (411 aa).

The protein belongs to the BPG-independent phosphoglycerate mutase family. A-PGAM subfamily.

It carries out the reaction (2R)-2-phosphoglycerate = (2R)-3-phosphoglycerate. Its pathway is carbohydrate degradation; glycolysis; pyruvate from D-glyceraldehyde 3-phosphate: step 3/5. Functionally, catalyzes the interconversion of 2-phosphoglycerate and 3-phosphoglycerate. In Thermococcus kodakarensis (strain ATCC BAA-918 / JCM 12380 / KOD1) (Pyrococcus kodakaraensis (strain KOD1)), this protein is 2,3-bisphosphoglycerate-independent phosphoglycerate mutase.